We begin with the raw amino-acid sequence, 393 residues long: Mitogen-activated protein kinase 10 (393 aa).

Residues 60-345 enclose the Protein kinase domain; the sequence is KPPIRPIGRG…VKEALAHPYL (286 aa). Residues 66–74 and Lys89 each bind ATP; that span reads IGRGACGIV. Asp186 (proton acceptor) is an active-site residue. At Thr218 the chain carries Phosphothreonine. Positions 218–220 match the TXY motif; the sequence is TEY. Residue Tyr220 is modified to Phosphotyrosine. Thr223 bears the Phosphothreonine mark.

The protein belongs to the protein kinase superfamily. CMGC Ser/Thr protein kinase family. MAP kinase subfamily. In terms of assembly, interacts with MKK2. Dually phosphorylated on Thr-218 and Tyr-220, which activates the enzyme.

The catalysed reaction is L-seryl-[protein] + ATP = O-phospho-L-seryl-[protein] + ADP + H(+). It carries out the reaction L-threonyl-[protein] + ATP = O-phospho-L-threonyl-[protein] + ADP + H(+). Its activity is regulated as follows. Activated by threonine and tyrosine phosphorylation. This Arabidopsis thaliana (Mouse-ear cress) protein is Mitogen-activated protein kinase 10 (MPK10).